Here is a 500-residue protein sequence, read N- to C-terminus: Protein gar2 (500 aa).

Basic and acidic residues-rich tracts occupy residues 1 to 41 (MAKK…KEIA) and 59 to 68 (KRASSPEPSK). Residues 1-262 (MAKKDKTSVK…TKPSQDSNET (262 aa)) form a disordered region. The segment covering 69–78 (KSVKKQKKSK) has biased composition (basic residues). Residues 90–120 (ESSSSESESSSSESESSSSESESSSSESSSS) are compositionally biased toward low complexity. The span at 126 to 137 (VIVKTEEKKESS) shows a compositional bias: basic and acidic residues. Residues Ser-143, Ser-144, and Ser-146 each carry the phosphoserine modification. The span at 152–163 (AVVKIEEKKESS) shows a compositional bias: basic and acidic residues. Over residues 164 to 182 (SDSSSESSSSESESESSSS) the composition is skewed to low complexity. Positions 191 to 201 (VEKTEEKKEGS) are enriched in basic and acidic residues. Positions 202 to 218 (SESSSDSESSSDSSSES) are enriched in low complexity. Residues 219-233 (GDSDSSSDSESESSS) show a composition bias toward acidic residues. Residues 234-250 (EDEKKRKAEPASEERPA) are compositionally biased toward basic and acidic residues. 2 consecutive RRM domains span residues 263–341 (CTVF…LSNP) and 366–443 (DTVF…FSTP). The disordered stretch occupies residues 441-500 (STPRTGGGSRGGRGGFGGRGGFGGRGGFGGGRGRGRGGARSGNPNRGSVAPFSGNKVTFD). The span at 445 to 480 (TGGGSRGGRGGFGGRGGFGGRGGFGGGRGRGRGGAR) shows a compositional bias: gly residues.

This sequence belongs to the RRM GAR family.

The protein resides in the nucleus. It is found in the nucleolus. In terms of biological role, helps the assembly of pre-ribosomal particles containing 18S rRNA. This Schizosaccharomyces pombe (strain 972 / ATCC 24843) (Fission yeast) protein is Protein gar2 (gar2).